Here is a 286-residue protein sequence, read N- to C-terminus: Bifunctional protein FolD (286 aa).

Residues 167-169 (GRS) and I233 contribute to the NADP(+) site.

It belongs to the tetrahydrofolate dehydrogenase/cyclohydrolase family. As to quaternary structure, homodimer.

The enzyme catalyses (6R)-5,10-methylene-5,6,7,8-tetrahydrofolate + NADP(+) = (6R)-5,10-methenyltetrahydrofolate + NADPH. It catalyses the reaction (6R)-5,10-methenyltetrahydrofolate + H2O = (6R)-10-formyltetrahydrofolate + H(+). The protein operates within one-carbon metabolism; tetrahydrofolate interconversion. Catalyzes the oxidation of 5,10-methylenetetrahydrofolate to 5,10-methenyltetrahydrofolate and then the hydrolysis of 5,10-methenyltetrahydrofolate to 10-formyltetrahydrofolate. This Limosilactobacillus reuteri (strain DSM 20016) (Lactobacillus reuteri) protein is Bifunctional protein FolD.